Here is an 847-residue protein sequence, read N- to C-terminus: Lethal(3)malignant brain tumor-like protein 1 (847 aa).

2 stretches are compositionally biased toward basic and acidic residues: residues 65–82 (FPRE…EKGV) and 144–155 (AVKEGHAKKDGD). Disordered stretches follow at residues 65 to 87 (FPRE…SEPI), 142 to 163 (AEAV…PTSR), and 237 to 296 (VKKR…SEEK). MBT repeat units lie at residues 300 to 400 (WSWA…LQPP), 408 to 507 (FSWT…LTPP), and 516 to 611 (FIWE…LQPP). The segment at 473–480 (FDNWDDTY) is interaction with monomethylated and dimethylated peptides. A CCHHC-type zinc finger spans residues 639-682 (SKYSFHHRKCPTPGCDGSGHVTGRFTAHYCLSGCPLAEKNQGKL). 4 residues coordinate Zn(2+): cysteine 648, cysteine 653, histidine 666, and cysteine 672. Residues 778–842 (WTIDEVFSFV…YNAILMFKNA (65 aa)) form the SAM domain.

In terms of assembly, homodimer.

The protein resides in the nucleus. In terms of biological role, polycomb group (PcG) protein that specifically recognizes and binds mono- and dimethyllysine residues on target proteins, thereby acting as a 'reader' of a network of post-translational modifications. PcG proteins maintain the transcriptionally repressive state of genes: acts as a chromatin compaction factor by recognizing and binding mono- and dimethylated histone H1b/H1-4 at 'Lys-26' (H1bK26me1 and H1bK26me2) and histone H4 at 'Lys-20' (H4K20me1 and H4K20me2), leading to condense chromatin and repress transcription. The polypeptide is Lethal(3)malignant brain tumor-like protein 1 (L3MBTL1) (Gallus gallus (Chicken)).